Here is a 240-residue protein sequence, read N- to C-terminus: DNA repair protein RecO (240 aa).

The protein belongs to the RecO family.

Its function is as follows. Involved in DNA repair and RecF pathway recombination. The polypeptide is DNA repair protein RecO (Wolbachia sp. subsp. Drosophila simulans (strain wRi)).